Reading from the N-terminus, the 57-residue chain is Probable mRNA interferase HicA 1 (57 aa).

The protein belongs to the HicA mRNA interferase family. As to quaternary structure, probably forms a complex with the cognate antitoxin HicB 1 which inhibits the mRNA interferase activity.

Toxic component of a type II toxin-antitoxin (TA) system. A probable translation-independent mRNA interferase. The sequence is that of Probable mRNA interferase HicA 1 (hicA1) from Photorhabdus laumondii subsp. laumondii (strain DSM 15139 / CIP 105565 / TT01) (Photorhabdus luminescens subsp. laumondii).